Reading from the N-terminus, the 400-residue chain is Elongation factor Tu (400 aa).

The tr-type G domain maps to 10–210 (KPHVNVGTIG…ALDSYIPEPV (201 aa)). Positions 19 to 26 (GHVDHGKT) are G1. 19–26 (GHVDHGKT) provides a ligand contact to GTP. Thr26 serves as a coordination point for Mg(2+). Positions 66–70 (ILTIA) are G2. A G3 region spans residues 87 to 90 (DCPG). GTP-binding positions include 87–91 (DCPGH) and 142–145 (NKCD). Positions 142–145 (NKCD) are G4. Residues 180-182 (SAI) form a G5 region.

The protein belongs to the TRAFAC class translation factor GTPase superfamily. Classic translation factor GTPase family. EF-Tu/EF-1A subfamily. As to quaternary structure, monomer.

It localises to the cytoplasm. The catalysed reaction is GTP + H2O = GDP + phosphate + H(+). GTP hydrolase that promotes the GTP-dependent binding of aminoacyl-tRNA to the A-site of ribosomes during protein biosynthesis. This Gemmatimonas aurantiaca (strain DSM 14586 / JCM 11422 / NBRC 100505 / T-27) protein is Elongation factor Tu.